Reading from the N-terminus, the 698-residue chain is Endogenous retrovirus group K member 9 Env polyprotein (698 aa).

The interval 1–47 is disordered; it reads MNPSEMQRKAPPRRRRHRNRAPLTHKMNKMVTSEEQMKLPSTKKAEP. The N-terminal stretch at 1–89 is a signal peptide; the sequence is MNPSEMQRKA…ALMIVSMVVS (89 aa). The span at 10-20 shows a compositional bias: basic residues; sequence APPRRRRHRNR. Topologically, residues 90 to 631 are extracellular; the sequence is LPMPAGAAAA…NLNPVTWVKT (542 aa). Residues Asn-100, Asn-128, Asn-153, Asn-273, Asn-354, Asn-371, and Asn-460 are each glycosylated (N-linked (GlcNAc...) asparagine). The tract at residues 465–485 is fusion peptide; the sequence is FIFTLIAVIMGLIAVTATAAV. Asn-506, Asn-553, Asn-565, and Asn-584 each carry an N-linked (GlcNAc...) asparagine glycan. A helical membrane pass occupies residues 632-652; sequence IGSTTIINLILILVCLFCLLL. Residues 653–698 are Cytoplasmic-facing; the sequence is VCRCTQQLRRDSDHRERAMMTMAVLSKRKGGNVGKSKRDQIVTVSV.

This sequence belongs to the beta type-B retroviral envelope protein family. HERV class-II K(HML-2) env subfamily. As to quaternary structure, the surface (SU) and transmembrane (TM) proteins form a heterodimer. SU and TM are attached by noncovalent interactions or by a labile interchain disulfide bond. In terms of processing, specific enzymatic cleavages in vivo yield the mature SU and TM proteins.

It is found in the cell membrane. The protein resides in the virion. In terms of biological role, retroviral envelope proteins mediate receptor recognition and membrane fusion during early infection. Endogenous envelope proteins may have kept, lost or modified their original function during evolution. This endogenous envelope protein has lost its original fusogenic properties. Functionally, SU mediates receptor recognition. TM anchors the envelope heterodimer to the viral membrane through one transmembrane domain. The other hydrophobic domain, called fusion peptide, mediates fusion of the viral membrane with the target cell membrane. The protein is Endogenous retrovirus group K member 9 Env polyprotein (ERVK-9) of Homo sapiens (Human).